We begin with the raw amino-acid sequence, 76 residues long: Acyl carrier protein (76 aa).

The region spanning 1 to 76 (MSVEEKVKKI…DAIDYIAGKQ (76 aa)) is the Carrier domain. Ser-36 is modified (O-(pantetheine 4'-phosphoryl)serine).

It belongs to the acyl carrier protein (ACP) family. In terms of processing, 4'-phosphopantetheine is transferred from CoA to a specific serine of apo-ACP by AcpS. This modification is essential for activity because fatty acids are bound in thioester linkage to the sulfhydryl of the prosthetic group.

It is found in the cytoplasm. Its pathway is lipid metabolism; fatty acid biosynthesis. In terms of biological role, carrier of the growing fatty acid chain in fatty acid biosynthesis. The polypeptide is Acyl carrier protein (Oleidesulfovibrio alaskensis (strain ATCC BAA-1058 / DSM 17464 / G20) (Desulfovibrio alaskensis)).